Here is a 264-residue protein sequence, read N- to C-terminus: NAD kinase (264 aa).

Asp-45 serves as the catalytic Proton acceptor. NAD(+) is bound by residues 45-46 (DG), 121-122 (NE), Arg-147, Asp-149, Ala-184, and Gln-221.

The protein belongs to the NAD kinase family. A divalent metal cation serves as cofactor.

The protein resides in the cytoplasm. It carries out the reaction NAD(+) + ATP = ADP + NADP(+) + H(+). Its function is as follows. Involved in the regulation of the intracellular balance of NAD and NADP, and is a key enzyme in the biosynthesis of NADP. Catalyzes specifically the phosphorylation on 2'-hydroxyl of the adenosine moiety of NAD to yield NADP. This chain is NAD kinase, found in Leuconostoc mesenteroides subsp. mesenteroides (strain ATCC 8293 / DSM 20343 / BCRC 11652 / CCM 1803 / JCM 6124 / NCDO 523 / NBRC 100496 / NCIMB 8023 / NCTC 12954 / NRRL B-1118 / 37Y).